The sequence spans 231 residues: NADH-ubiquinone oxidoreductase chain 4 (231 aa).

6 helical membrane passes run 1–21 (PIAG…YGII), 34–54 (LFLP…LTCL), 63–85 (IAYS…TPWG), 89–111 (AMAL…NMTY), 124–146 (GLHN…NIAI), and 169–189 (TIII…HMFL).

Belongs to the complex I subunit 4 family.

Its subcellular location is the mitochondrion membrane. It catalyses the reaction a ubiquinone + NADH + 5 H(+)(in) = a ubiquinol + NAD(+) + 4 H(+)(out). Functionally, core subunit of the mitochondrial membrane respiratory chain NADH dehydrogenase (Complex I) that is believed to belong to the minimal assembly required for catalysis. Complex I functions in the transfer of electrons from NADH to the respiratory chain. The immediate electron acceptor for the enzyme is believed to be ubiquinone. The sequence is that of NADH-ubiquinone oxidoreductase chain 4 (MT-ND4) from Crotalus lepidus (Banded rock rattlesnake).